A 263-amino-acid chain; its full sequence is Acyl-[acyl-carrier-protein]--UDP-N-acetylglucosamine O-acyltransferase (263 aa).

This sequence belongs to the transferase hexapeptide repeat family. LpxA subfamily. Homotrimer.

The protein localises to the cytoplasm. It carries out the reaction a (3R)-hydroxyacyl-[ACP] + UDP-N-acetyl-alpha-D-glucosamine = a UDP-3-O-[(3R)-3-hydroxyacyl]-N-acetyl-alpha-D-glucosamine + holo-[ACP]. Its pathway is glycolipid biosynthesis; lipid IV(A) biosynthesis; lipid IV(A) from (3R)-3-hydroxytetradecanoyl-[acyl-carrier-protein] and UDP-N-acetyl-alpha-D-glucosamine: step 1/6. In terms of biological role, involved in the biosynthesis of lipid A, a phosphorylated glycolipid that anchors the lipopolysaccharide to the outer membrane of the cell. This is Acyl-[acyl-carrier-protein]--UDP-N-acetylglucosamine O-acyltransferase from Xanthomonas euvesicatoria pv. vesicatoria (strain 85-10) (Xanthomonas campestris pv. vesicatoria).